Consider the following 178-residue polypeptide: ATP synthase subunit b (178 aa).

A helical membrane pass occupies residues 11–31 (IIPEPVEIVVGLVAFLLLLFV).

Belongs to the ATPase B chain family. F-type ATPases have 2 components, F(1) - the catalytic core - and F(0) - the membrane proton channel. F(1) has five subunits: alpha(3), beta(3), gamma(1), delta(1), epsilon(1). F(0) has three main subunits: a(1), b(2) and c(10-14). The alpha and beta chains form an alternating ring which encloses part of the gamma chain. F(1) is attached to F(0) by a central stalk formed by the gamma and epsilon chains, while a peripheral stalk is formed by the delta and b chains.

It localises to the cell membrane. Its function is as follows. F(1)F(0) ATP synthase produces ATP from ADP in the presence of a proton or sodium gradient. F-type ATPases consist of two structural domains, F(1) containing the extramembraneous catalytic core and F(0) containing the membrane proton channel, linked together by a central stalk and a peripheral stalk. During catalysis, ATP synthesis in the catalytic domain of F(1) is coupled via a rotary mechanism of the central stalk subunits to proton translocation. Functionally, component of the F(0) channel, it forms part of the peripheral stalk, linking F(1) to F(0). The chain is ATP synthase subunit b from Saccharopolyspora erythraea (strain ATCC 11635 / DSM 40517 / JCM 4748 / NBRC 13426 / NCIMB 8594 / NRRL 2338).